A 96-amino-acid chain; its full sequence is Nucleoid-associated protein CF0672 (96 aa).

It belongs to the YbaB/EbfC family. As to quaternary structure, homodimer.

The protein resides in the cytoplasm. It localises to the nucleoid. Binds to DNA and alters its conformation. May be involved in regulation of gene expression, nucleoid organization and DNA protection. The polypeptide is Nucleoid-associated protein CF0672 (Chlamydia felis (strain Fe/C-56) (Chlamydophila felis)).